We begin with the raw amino-acid sequence, 155 residues long: Histone H3-like 3 (155 aa).

A disordered region spans residues 34 to 59 (IGVKLPNSYRPGDQTVCKPAPPTDGV).

This sequence belongs to the histone H3 family. As to quaternary structure, the nucleosome is a histone octamer containing two molecules each of H2A, H2B, H3 and H4 assembled in one H3-H4 heterotetramer and two H2A-H2B heterodimers. The octamer wraps approximately 147 bp of DNA. As to expression, pollen specific.

It is found in the nucleus. It localises to the chromosome. Core component of nucleosome. Nucleosomes wrap and compact DNA into chromatin, limiting DNA accessibility to the cellular machineries which require DNA as a template. Histones thereby play a central role in transcription regulation, DNA repair, DNA replication and chromosomal stability. DNA accessibility is regulated via a complex set of post-translational modifications of histones, also called histone code, and nucleosome remodeling. This chain is Histone H3-like 3 (leH3), found in Lilium longiflorum (Trumpet lily).